Reading from the N-terminus, the 109-residue chain is Cell division protein ZapA (109 aa).

Positions 21-99 (PEQQDALNQA…IEQALLEQGR (79 aa)) form a coiled coil.

Belongs to the ZapA family. Type 1 subfamily. Homodimer. Interacts with FtsZ.

It is found in the cytoplasm. Its function is as follows. Activator of cell division through the inhibition of FtsZ GTPase activity, therefore promoting FtsZ assembly into bundles of protofilaments necessary for the formation of the division Z ring. It is recruited early at mid-cell but it is not essential for cell division. This chain is Cell division protein ZapA, found in Pectobacterium carotovorum subsp. carotovorum (strain PC1).